The following is a 163-amino-acid chain: Nucleotide-binding protein APL_1231 (163 aa).

The protein belongs to the YajQ family.

Nucleotide-binding protein. The sequence is that of Nucleotide-binding protein APL_1231 from Actinobacillus pleuropneumoniae serotype 5b (strain L20).